The following is a 438-amino-acid chain: Ribosomal protein uS12 methylthiotransferase RimO (438 aa).

One can recognise an MTTase N-terminal domain in the interval 4–120 (HSLFLLSLGC…ILASLGARYR (117 aa)). Residues C13, C49, C83, C144, C148, and C151 each contribute to the [4Fe-4S] cluster site. Positions 130–359 (LTPSHYAYLK…MELQEAVAES (230 aa)) constitute a Radical SAM core domain. The TRAM domain occupies 362–429 (REFEGKEIEV…AHELYGEIVQ (68 aa)).

This sequence belongs to the methylthiotransferase family. RimO subfamily. [4Fe-4S] cluster is required as a cofactor.

It is found in the cytoplasm. The enzyme catalyses L-aspartate(89)-[ribosomal protein uS12]-hydrogen + (sulfur carrier)-SH + AH2 + 2 S-adenosyl-L-methionine = 3-methylsulfanyl-L-aspartate(89)-[ribosomal protein uS12]-hydrogen + (sulfur carrier)-H + 5'-deoxyadenosine + L-methionine + A + S-adenosyl-L-homocysteine + 2 H(+). Functionally, catalyzes the methylthiolation of an aspartic acid residue of ribosomal protein uS12. This chain is Ribosomal protein uS12 methylthiotransferase RimO, found in Chlorobium chlorochromatii (strain CaD3).